We begin with the raw amino-acid sequence, 130 residues long: Small ribosomal subunit protein uS8 (130 aa).

The protein belongs to the universal ribosomal protein uS8 family. As to quaternary structure, part of the 30S ribosomal subunit. Contacts proteins S5 and S12.

One of the primary rRNA binding proteins, it binds directly to 16S rRNA central domain where it helps coordinate assembly of the platform of the 30S subunit. This chain is Small ribosomal subunit protein uS8, found in Photorhabdus laumondii subsp. laumondii (strain DSM 15139 / CIP 105565 / TT01) (Photorhabdus luminescens subsp. laumondii).